The chain runs to 231 residues: Flagellar L-ring protein (231 aa).

Positions Met-1–Gly-20 are cleaved as a signal peptide. Cys-21 carries N-palmitoyl cysteine lipidation. A lipid anchor (S-diacylglycerol cysteine) is attached at Cys-21.

This sequence belongs to the FlgH family. As to quaternary structure, the basal body constitutes a major portion of the flagellar organelle and consists of four rings (L,P,S, and M) mounted on a central rod.

It is found in the cell outer membrane. It localises to the bacterial flagellum basal body. Assembles around the rod to form the L-ring and probably protects the motor/basal body from shearing forces during rotation. This Desulfotalea psychrophila (strain LSv54 / DSM 12343) protein is Flagellar L-ring protein.